The sequence spans 351 residues: Uroporphyrinogen decarboxylase (351 aa).

Substrate is bound by residues 25 to 29, Asp74, Tyr151, Ser206, and His325; that span reads RQAGR.

Belongs to the uroporphyrinogen decarboxylase family. As to quaternary structure, homodimer.

It localises to the cytoplasm. It carries out the reaction uroporphyrinogen III + 4 H(+) = coproporphyrinogen III + 4 CO2. It participates in porphyrin-containing compound metabolism; protoporphyrin-IX biosynthesis; coproporphyrinogen-III from 5-aminolevulinate: step 4/4. In terms of biological role, catalyzes the decarboxylation of four acetate groups of uroporphyrinogen-III to yield coproporphyrinogen-III. The chain is Uroporphyrinogen decarboxylase from Chlorobium phaeobacteroides (strain BS1).